Reading from the N-terminus, the 445-residue chain is Exodeoxyribonuclease 7 large subunit (445 aa).

The protein belongs to the XseA family. Heterooligomer composed of large and small subunits.

The protein localises to the cytoplasm. The enzyme catalyses Exonucleolytic cleavage in either 5'- to 3'- or 3'- to 5'-direction to yield nucleoside 5'-phosphates.. Functionally, bidirectionally degrades single-stranded DNA into large acid-insoluble oligonucleotides, which are then degraded further into small acid-soluble oligonucleotides. This chain is Exodeoxyribonuclease 7 large subunit, found in Shewanella halifaxensis (strain HAW-EB4).